Reading from the N-terminus, the 556-residue chain is MPIGNLGHNPNVNNSIPPAPPLPSQTDGAGGRGQLINSTGPLGSRALFTPVRNSMADSGDNRASDVPGLPVNPMRLAASEITLNDGFEVLHDHGPLDTLNRQIGSSVFRVETQEDGKHIAVGQRNGVETSVVLSDQEYARLQSIDPEGKDKFVFTGGRGGAGHAMVTVASDITEARQRILELLEPKGTGESKGAGESKGVGELRESNSGAENTTETQTSTSTSSLRSDPKLWLALGTVATGLIGLAATGIVQALALTPEPDSPTTTDPDAAASATETATRDQLTKEAFQNPDNQKVNIDELGNAIPSGVLKDDVVANIEEQAKAAGEEAKQQAIENNAQAQKKYDEQQAKRQEELKVSSGAGYGLSGALILGGGIGVAVTAALHRKNQPVEQTTTTTTTTTSARTVENKPANNTPAQGNVDTPGSEDTMESRRSSMASTSSTFFDTSSIGTVQNPYADVKTSLHDSQVPTSNSNTSVQNMGNTDSVVYSTIQHPPRDTTDNGARLLGNPSAGIQSTYARLALSGGLRHDMGGLTGGSNSAVNTSNNPPAPGSHRFV.

2 disordered regions span residues 1 to 44 (MPIG…PLGS) and 182 to 226 (LLEP…SSLR). Topologically, residues 1 to 230 (MPIGNLGHNP…STSSLRSDPK (230 aa)) are cytoplasmic. Over residues 182-205 (LLEPKGTGESKGAGESKGVGELRE) the composition is skewed to basic and acidic residues. The segment covering 213 to 224 (TTETQTSTSTSS) has biased composition (low complexity). The helical transmembrane segment at 231 to 251 (LWLALGTVATGLIGLAATGIV) threads the bilayer. Over 252 to 362 (QALALTPEPD…EELKVSSGAG (111 aa)) the chain is Extracellular. The span at 257 to 277 (TPEPDSPTTTDPDAAASATET) shows a compositional bias: low complexity. A disordered region spans residues 257-280 (TPEPDSPTTTDPDAAASATETATR). A helical transmembrane segment spans residues 363–383 (YGLSGALILGGGIGVAVTAAL). At 384 to 556 (HRKNQPVEQT…PPAPGSHRFV (173 aa)) the chain is on the cytoplasmic side. A disordered region spans residues 388–449 (QPVEQTTTTT…SSTFFDTSSI (62 aa)). Polar residues predominate over residues 402-422 (SARTVENKPANNTPAQGNVDT). Positions 434–448 (SSMASTSSTFFDTSS) are enriched in low complexity. An Essential for actin pedestal formation motif is present at residues 454-456 (NPY). The tract at residues 531–556 (GGLTGGSNSAVNTSNNPPAPGSHRFV) is disordered. Residues 536 to 546 (GSNSAVNTSNN) are compositionally biased toward polar residues.

This sequence belongs to the Tir receptor family. As to quaternary structure, interacts with intimin and host proteins. Phosphorylated by host kinases.

Its subcellular location is the secreted. The protein resides in the host cell membrane. In terms of biological role, multifunctional protein that is required for efficient pedestal formation in host epithelial cells during infection. The extracellular region acts as a receptor for bacterial intimin, allowing the bacterium to attach tightly to the host-cell surface. Simultaneously, the intracellular region initiates a signaling cascade in the host cell, which leads to actin polymerization and formation of actin pedestals at the sites of bacterial adhesion. The protein is Translocated intimin receptor Tir (tir) of Escherichia coli O55:H7 (strain CB9615 / EPEC).